Here is a 449-residue protein sequence, read N- to C-terminus: Phosphoglucosamine mutase (449 aa).

The Phosphoserine intermediate role is filled by Ser-101. Mg(2+) is bound by residues Ser-101, Asp-241, Asp-243, and Asp-245. Ser-101 is modified (phosphoserine).

It belongs to the phosphohexose mutase family. Mg(2+) serves as cofactor. In terms of processing, activated by phosphorylation.

It catalyses the reaction alpha-D-glucosamine 1-phosphate = D-glucosamine 6-phosphate. Its function is as follows. Catalyzes the conversion of glucosamine-6-phosphate to glucosamine-1-phosphate. The protein is Phosphoglucosamine mutase of Ruminiclostridium cellulolyticum (strain ATCC 35319 / DSM 5812 / JCM 6584 / H10) (Clostridium cellulolyticum).